A 463-amino-acid chain; its full sequence is T-box transcription factor TBX1-A (463 aa).

2 disordered regions span residues 39–58 (SPSP…PCSA) and 75–104 (GASS…VKKN). The span at 75 to 96 (GASSSSCASSTPGSGSTGSSSS) shows a compositional bias: low complexity. The segment at residues 119-297 (LWDEFNQLGT…SNPFAKGFRD (179 aa)) is a DNA-binding region (T-box). Disordered regions lie at residues 320-354 (RSRN…PLHG) and 377-409 (VPLS…PYKY). Residues 323–332 (NPVSSPTQNG) show a composition bias toward polar residues. Residues 333-347 (SDKDGDGRREYERDA) are compositionally biased toward basic and acidic residues. The Nuclear localization signal signature appears at 420 to 431 (KTRPAPYPLPTI).

In terms of assembly, binds DNA as a dimer. Interacts with dscr6/ripply3.

The protein resides in the nucleus. Functionally, probable transcriptional regulator involved in developmental processes. Binds to the palindromic T site 5'-TTCACACCTAGGTGTGAA-3' DNA sequence. Induces pre-placodal ectoderm (PPE) gene expression in regions where RIPPLY3 is absent. Plays a role in the formation of the anteroposterior (AP) axis during embryonic development; required to establish the posterolateral border of the pre-placodal ectoderm (PPE) acting downstream of the retinoic acid receptor (RAR) signaling. The sequence is that of T-box transcription factor TBX1-A (tbx1-a) from Xenopus laevis (African clawed frog).